A 409-amino-acid chain; its full sequence is Beta-glucanase (409 aa).

A signal peptide spans 1–31 (MRKNRGFSFSSKAVMMCCLAFLLIPASFAFA). Glu95 acts as the Proton donor in catalysis. Asp156 serves as the catalytic Nucleophile.

This sequence belongs to the glycosyl hydrolase 8 (cellulase D) family.

The enzyme catalyses Hydrolysis of (1-&gt;4)-beta-D-glucosidic linkages in beta-D-glucans containing (1-&gt;3)- and (1-&gt;4)-bonds.. The polypeptide is Beta-glucanase (bgc) (Niallia circulans (Bacillus circulans)).